Consider the following 426-residue polypeptide: Phosphomethylpyrimidine synthase (426 aa).

Substrate is bound by residues N65, M94, Y123, H162, 184 to 186, 225 to 228, and E264; these read SRG and DGLR. Zn(2+) is bound at residue H268. A substrate-binding site is contributed by Y291. Residue H332 coordinates Zn(2+). The [4Fe-4S] cluster site is built by C409, C412, and C416.

The protein belongs to the ThiC family. It depends on [4Fe-4S] cluster as a cofactor.

The catalysed reaction is 5-amino-1-(5-phospho-beta-D-ribosyl)imidazole + S-adenosyl-L-methionine = 4-amino-2-methyl-5-(phosphooxymethyl)pyrimidine + CO + 5'-deoxyadenosine + formate + L-methionine + 3 H(+). It functions in the pathway cofactor biosynthesis; thiamine diphosphate biosynthesis. Its function is as follows. Catalyzes the synthesis of the hydroxymethylpyrimidine phosphate (HMP-P) moiety of thiamine from aminoimidazole ribotide (AIR) in a radical S-adenosyl-L-methionine (SAM)-dependent reaction. In Thermodesulfovibrio yellowstonii (strain ATCC 51303 / DSM 11347 / YP87), this protein is Phosphomethylpyrimidine synthase.